The chain runs to 436 residues: UDP-N-acetylmuramoylalanine--D-glutamate ligase (436 aa).

112 to 118 (GSNGKST) provides a ligand contact to ATP.

It belongs to the MurCDEF family.

The protein resides in the cytoplasm. It carries out the reaction UDP-N-acetyl-alpha-D-muramoyl-L-alanine + D-glutamate + ATP = UDP-N-acetyl-alpha-D-muramoyl-L-alanyl-D-glutamate + ADP + phosphate + H(+). The protein operates within cell wall biogenesis; peptidoglycan biosynthesis. Its function is as follows. Cell wall formation. Catalyzes the addition of glutamate to the nucleotide precursor UDP-N-acetylmuramoyl-L-alanine (UMA). In Photorhabdus laumondii subsp. laumondii (strain DSM 15139 / CIP 105565 / TT01) (Photorhabdus luminescens subsp. laumondii), this protein is UDP-N-acetylmuramoylalanine--D-glutamate ligase.